A 270-amino-acid polypeptide reads, in one-letter code: Ribosomal RNA small subunit methyltransferase A (270 aa).

6 residues coordinate S-adenosyl-L-methionine: Asn-18, Leu-20, Gly-45, Glu-66, Asp-91, and Asn-112.

The protein belongs to the class I-like SAM-binding methyltransferase superfamily. rRNA adenine N(6)-methyltransferase family. RsmA subfamily.

Its subcellular location is the cytoplasm. The catalysed reaction is adenosine(1518)/adenosine(1519) in 16S rRNA + 4 S-adenosyl-L-methionine = N(6)-dimethyladenosine(1518)/N(6)-dimethyladenosine(1519) in 16S rRNA + 4 S-adenosyl-L-homocysteine + 4 H(+). Functionally, specifically dimethylates two adjacent adenosines (A1518 and A1519) in the loop of a conserved hairpin near the 3'-end of 16S rRNA in the 30S particle. May play a critical role in biogenesis of 30S subunits. This chain is Ribosomal RNA small subunit methyltransferase A, found in Shewanella piezotolerans (strain WP3 / JCM 13877).